A 65-amino-acid polypeptide reads, in one-letter code: Conotoxin Cal1.3 (65 aa).

Positions 1-18 are cleaved as a signal peptide; it reads MRCLPVFIILLLLASTAA. Residues 19 to 49 constitute a propeptide that is removed on maturation; sequence VDVAGSKLKRRLERKPYQGSQAYVKKTAFGL. Disulfide bonds link Cys52-Cys62 and Cys53-Cys59. At Pro61 the chain carries 4-hydroxyproline. Cys62 is modified (cysteine amide).

Belongs to the conotoxin T superfamily. As to expression, expressed by the venom duct.

It localises to the secreted. In terms of biological role, probable neurotoxin with unknown target. Possibly targets ion channels. The chain is Conotoxin Cal1.3 from Californiconus californicus (California cone).